A 113-amino-acid chain; its full sequence is Iron-sulfur cluster insertion protein ErpA (113 aa).

Positions 41, 105, and 107 each coordinate iron-sulfur cluster.

Belongs to the HesB/IscA family. Homodimer. The cofactor is iron-sulfur cluster.

Required for insertion of 4Fe-4S clusters for at least IspG. This Mannheimia succiniciproducens (strain KCTC 0769BP / MBEL55E) protein is Iron-sulfur cluster insertion protein ErpA.